Reading from the N-terminus, the 87-residue chain is Putative outer membrane protein ArbH (87 aa).

Residues 1–23 (MKIKNSYLVIASLLYPISFISTA) form the signal peptide.

This sequence belongs to the porin LamB (TC 1.B.3) family.

The protein resides in the cell outer membrane. In terms of biological role, may be a sugar porin with a broad carbohydrate specificity. In Dickeya chrysanthemi (Pectobacterium chrysanthemi), this protein is Putative outer membrane protein ArbH (arbH).